Consider the following 346-residue polypeptide: Uroporphyrinogen decarboxylase (346 aa).

Substrate contacts are provided by residues arginine 23–arginine 27, aspartate 72, tyrosine 149, threonine 204, and histidine 318.

Belongs to the uroporphyrinogen decarboxylase family. In terms of assembly, homodimer.

It localises to the cytoplasm. It catalyses the reaction uroporphyrinogen III + 4 H(+) = coproporphyrinogen III + 4 CO2. It participates in porphyrin-containing compound metabolism; protoporphyrin-IX biosynthesis; coproporphyrinogen-III from 5-aminolevulinate: step 4/4. Its function is as follows. Catalyzes the decarboxylation of four acetate groups of uroporphyrinogen-III to yield coproporphyrinogen-III. The protein is Uroporphyrinogen decarboxylase of Synechococcus sp. (strain JA-2-3B'a(2-13)) (Cyanobacteria bacterium Yellowstone B-Prime).